We begin with the raw amino-acid sequence, 260 residues long: Ribose-5-phosphate isomerase (260 aa).

The protein belongs to the ribose 5-phosphate isomerase family.

It localises to the cytoplasm. It carries out the reaction aldehydo-D-ribose 5-phosphate = D-ribulose 5-phosphate. The protein operates within carbohydrate degradation; pentose phosphate pathway; D-ribose 5-phosphate from D-ribulose 5-phosphate (non-oxidative stage): step 1/1. This is Ribose-5-phosphate isomerase (RKI1) from Candida glabrata (strain ATCC 2001 / BCRC 20586 / JCM 3761 / NBRC 0622 / NRRL Y-65 / CBS 138) (Yeast).